The chain runs to 127 residues: Small ribosomal subunit protein uS11 (127 aa).

It belongs to the universal ribosomal protein uS11 family. As to quaternary structure, part of the 30S ribosomal subunit. Interacts with proteins S7 and S18. Binds to IF-3.

Its function is as follows. Located on the platform of the 30S subunit, it bridges several disparate RNA helices of the 16S rRNA. Forms part of the Shine-Dalgarno cleft in the 70S ribosome. The polypeptide is Small ribosomal subunit protein uS11 (Chlorobaculum tepidum (strain ATCC 49652 / DSM 12025 / NBRC 103806 / TLS) (Chlorobium tepidum)).